Here is a 207-residue protein sequence, read N- to C-terminus: Small ribosomal subunit protein uS4c (207 aa).

Residues 20–52 are disordered; the sequence is GFSKKIDRNHTPPGQHGWKKKASDQKKSKESQY. The span at 40–52 shows a compositional bias: basic and acidic residues; that stretch reads KASDQKKSKESQY. The region spanning 97–158 is the S4 RNA-binding domain; sequence MRLDNIIYRL…NSQQLIKNYL (62 aa).

It belongs to the universal ribosomal protein uS4 family. In terms of assembly, part of the 30S ribosomal subunit. Contacts protein S5. The interaction surface between S4 and S5 is involved in control of translational fidelity.

It is found in the plastid. Its function is as follows. One of the primary rRNA binding proteins, it binds directly to 16S rRNA where it nucleates assembly of the body of the 30S subunit. Functionally, with S5 and S12 plays an important role in translational accuracy. The polypeptide is Small ribosomal subunit protein uS4c (rps4) (Prototheca wickerhamii).